A 327-amino-acid polypeptide reads, in one-letter code: MEELLIEDSQRFTIFPIQHPECWNWYKKLESLTWTAQEVDMCKDIDDWEAMPKPQREFYKQILAFFVVADEIVIENLLTNFMREIKVKEVLYFYTMQAAQECVHSEAYSIQVKTLIPDEKEQQRIFSGIEKHPIIRKMAQWVQQWMDPVKNSLGERLVGFAAVEGILFQNHFVAIQFLKEQNIMPGLVSYNEFISRDEGMHCSFACFLISNYLNNIPEEKIIHKILKEAVELVDEFISYAFDKARGSVPGFSKEMLFQYIRYFTDNLCFMLQCKSIYKVENPFPQMTKFFLNEVEKTNFFELRPTQYQNCVKDDAFAFKLFLNDDDF.

Asp70, Glu101, and His104 together coordinate Fe cation. Tyr108 is a catalytic residue. Glu164, Glu198, and His201 together coordinate Fe cation.

It belongs to the ribonucleoside diphosphate reductase small chain family. In terms of assembly, heterotetramer composed of a homodimer of the large subunit (R1) and a homodimer of the small subunit (R2). Larger multisubunit protein complex are also active, composed of (R1)n(R2)n. Requires Fe cation as cofactor.

It carries out the reaction a 2'-deoxyribonucleoside 5'-diphosphate + [thioredoxin]-disulfide + H2O = a ribonucleoside 5'-diphosphate + [thioredoxin]-dithiol. Functionally, ribonucleoside-diphosphate reductase holoenzyme provides the precursors necessary for viral DNA synthesis. Allows virus growth in non-dividing cells. Catalyzes the biosynthesis of deoxyribonucleotides from the corresponding ribonucleotides. This is Ribonucleoside-diphosphate reductase small chain from Ornithodoros (relapsing fever ticks).